The sequence spans 236 residues: ATP synthase subunit a (236 aa).

Helical transmembrane passes span 18-38, 79-99, 112-132, 174-194, and 205-227; these read STVMMLLVAAIIVFLIAFIST, GITLIMFIAVSNLLGLPFSIV, DPTVTMTLATMILVLSHFYGV, IYAGEILLGLLAGLASSGAVG, and WQGFSIFIGFIQAFIFTMLTMVY.

It belongs to the ATPase A chain family. F-type ATPases have 2 components, CF(1) - the catalytic core - and CF(0) - the membrane proton channel. CF(1) has five subunits: alpha(3), beta(3), gamma(1), delta(1), epsilon(1). CF(0) has three main subunits: a(1), b(2) and c(9-12). The alpha and beta chains form an alternating ring which encloses part of the gamma chain. CF(1) is attached to CF(0) by a central stalk formed by the gamma and epsilon chains, while a peripheral stalk is formed by the delta and b chains.

It localises to the cell membrane. Key component of the proton channel; it plays a direct role in the translocation of protons across the membrane. This Lysinibacillus sphaericus (strain C3-41) protein is ATP synthase subunit a.